We begin with the raw amino-acid sequence, 346 residues long: Methylthioribose-1-phosphate isomerase (346 aa).

Substrate-binding positions include 47–49, Arg-88, and Gln-195; that span reads RGA. Asp-236 (proton donor) is an active-site residue. Residue 246–247 participates in substrate binding; that stretch reads NK.

It belongs to the eIF-2B alpha/beta/delta subunits family. MtnA subfamily.

The enzyme catalyses 5-(methylsulfanyl)-alpha-D-ribose 1-phosphate = 5-(methylsulfanyl)-D-ribulose 1-phosphate. The protein operates within amino-acid biosynthesis; L-methionine biosynthesis via salvage pathway; L-methionine from S-methyl-5-thio-alpha-D-ribose 1-phosphate: step 1/6. Catalyzes the interconversion of methylthioribose-1-phosphate (MTR-1-P) into methylthioribulose-1-phosphate (MTRu-1-P). This Maridesulfovibrio salexigens (strain ATCC 14822 / DSM 2638 / NCIMB 8403 / VKM B-1763) (Desulfovibrio salexigens) protein is Methylthioribose-1-phosphate isomerase.